A 365-amino-acid polypeptide reads, in one-letter code: Endophilin-B1 (365 aa).

The residue at position 1 (M1) is an N-acetylmethionine. A membrane-binding amphipathic helix region spans residues 1–30 (MNIMDFNVKKLAADAGTFLSRAVQFTEEKL). The segment at 1–37 (MNIMDFNVKKLAADAGTFLSRAVQFTEEKLGQAEKTE) is required for membrane binding. One can recognise a BAR domain in the interval 27 to 261 (EEKLGQAEKT…LGSFPSNYHS (235 aa)). At T145 the chain carries Phosphothreonine; by CDK5. Residues 155 to 195 (YKTIAKERKLLQNKRLDLDAAKTRLKKAKAAETRASSEQEL) adopt a coiled-coil conformation. The SH3 domain occupies 305–365 (GGSRRARVLY…VPITYLELLN (61 aa)).

Belongs to the endophilin family. As to quaternary structure, homodimer, and heterodimer with SH3GLB2. Binds BAX; induction of apoptosis augments BAX binding. Binds DNM1, HTT, AMPH, BIN1 and ARFGAP1. Interacts with UVRAG; UVRAG bridges the interaction to BECN1 indicative for an association with the PI3K complex II (PI3KC3-C2). In terms of processing, phosphorylated at Thr-145 by CDK5; this phosphorylation is required for autophagy induction in starved neurons and facilitates homodimerization.

It is found in the cytoplasm. The protein resides in the golgi apparatus membrane. It localises to the mitochondrion outer membrane. The protein localises to the cytoplasmic vesicle. Its subcellular location is the autophagosome membrane. It is found in the midbody. Functionally, may be required for normal outer mitochondrial membrane dynamics. Required for coatomer-mediated retrograde transport in certain cells. May recruit other proteins to membranes with high curvature. May promote membrane fusion. Involved in activation of caspase-dependent apoptosis by promoting BAX/BAK1 activation. Involved in caspase-independent apoptosis during nutrition starvation and involved in the regulation of autophagy. Activates lipid kinase activity of PIK3C3 during autophagy probably by associating with the PI3K complex II (PI3KC3-C2). Associated with PI3KC3-C2 during autophagy may regulate the trafficking of ATG9A from the Golgi complex to the peripheral cytoplasm for the formation of autophagosomes by inducing Golgi membrane tubulation and fragmentation. Involved in regulation of degradative endocytic trafficking and cytokinesis, probably in the context of PI3KC3-C2. The chain is Endophilin-B1 (SH3GLB1) from Bos taurus (Bovine).